The sequence spans 470 residues: Uronate isomerase (470 aa).

It belongs to the metallo-dependent hydrolases superfamily. Uronate isomerase family.

The enzyme catalyses D-glucuronate = D-fructuronate. It carries out the reaction aldehydo-D-galacturonate = keto-D-tagaturonate. It functions in the pathway carbohydrate metabolism; pentose and glucuronate interconversion. In Klebsiella pneumoniae (strain 342), this protein is Uronate isomerase.